The primary structure comprises 238 residues: uncharacterized protein (238 aa).

The protein belongs to the chlamydial CPn_0658/CT_538/TC_0825 family.

This is an uncharacterized protein from Chlamydia muridarum (strain MoPn / Nigg).